Consider the following 205-residue polypeptide: Calcium-binding allergen Bet v 3 (205 aa).

Positions 1-26 (MPCSTEAMEKAGHGHASTPRKRSLSN) are disordered. 4 EF-hand domains span residues 36–71 (LNTL…LGLE), 72–107 (TDLS…LNDS), 130–165 (QEEA…LGFS), and 168–203 (SEID…VLVR). The Ca(2+) site is built by Asp-49, Asn-51, Asp-53, and Glu-60. Ca(2+) is bound by residues Asp-143, Asp-145, Asp-147, Tyr-149, Glu-154, Asp-181, Asn-183, Asp-185, Arg-187, and Glu-192.

Could be involved in calcium metabolism in pollen. Binds 3 calcium ions. The protein is Calcium-binding allergen Bet v 3 (BETVIII) of Betula pendula (European white birch).